The chain runs to 21 residues: Peptide PGLa-BM2 (21 aa).

A21 is modified (alanine amide).

In terms of tissue distribution, expressed by the skin glands.

The protein localises to the secreted. Antimicrobial peptide. In Xenopus boumbaensis (Mawa clawed frog), this protein is Peptide PGLa-BM2.